The chain runs to 130 residues: Small ribosomal subunit protein uS11 (130 aa).

This sequence belongs to the universal ribosomal protein uS11 family. In terms of assembly, part of the 30S ribosomal subunit. Interacts with proteins S7 and S18. Binds to IF-3.

Functionally, located on the platform of the 30S subunit, it bridges several disparate RNA helices of the 16S rRNA. Forms part of the Shine-Dalgarno cleft in the 70S ribosome. This Shewanella sediminis (strain HAW-EB3) protein is Small ribosomal subunit protein uS11.